We begin with the raw amino-acid sequence, 408 residues long: NADH-quinone oxidoreductase subunit H (408 aa).

Helical transmembrane passes span 18–38 (LAKA…AILI), 84–104 (PIYL…FSVI), 124–144 (LPVA…GIVL), 165–185 (VVSY…YAGT), 198–218 (TWFV…MVGE), 261–281 (SALA…FNLI), 288–308 (WWPL…YFWL), 321–341 (MALG…VVAI), and 353–373 (WAAW…WGLA). The segment at 381–408 (VQPPPPQSTGAYPVPPLPSVGTKETADA) is disordered. Positions 382–398 (QPPPPQSTGAYPVPPLP) are enriched in pro residues.

The protein belongs to the complex I subunit 1 family. NDH-1 is composed of 14 different subunits. Subunits NuoA, H, J, K, L, M, N constitute the membrane sector of the complex.

The protein localises to the cell membrane. It carries out the reaction a quinone + NADH + 5 H(+)(in) = a quinol + NAD(+) + 4 H(+)(out). Functionally, NDH-1 shuttles electrons from NADH, via FMN and iron-sulfur (Fe-S) centers, to quinones in the respiratory chain. The immediate electron acceptor for the enzyme in this species is believed to be menaquinone. Couples the redox reaction to proton translocation (for every two electrons transferred, four hydrogen ions are translocated across the cytoplasmic membrane), and thus conserves the redox energy in a proton gradient. This subunit may bind ubiquinone. In Mycolicibacterium smegmatis (strain ATCC 700084 / mc(2)155) (Mycobacterium smegmatis), this protein is NADH-quinone oxidoreductase subunit H.